Here is a 704-residue protein sequence, read N- to C-terminus: Elongation factor G (704 aa).

Positions 8-291 constitute a tr-type G domain; it reads DKVRNIGIMA…AVVEYLASPV (284 aa). GTP contacts are provided by residues 17 to 24, 90 to 94, and 144 to 147; these read AHIDAGKT, DTPGH, and NKMD.

The protein belongs to the TRAFAC class translation factor GTPase superfamily. Classic translation factor GTPase family. EF-G/EF-2 subfamily.

It localises to the cytoplasm. Its function is as follows. Catalyzes the GTP-dependent ribosomal translocation step during translation elongation. During this step, the ribosome changes from the pre-translocational (PRE) to the post-translocational (POST) state as the newly formed A-site-bound peptidyl-tRNA and P-site-bound deacylated tRNA move to the P and E sites, respectively. Catalyzes the coordinated movement of the two tRNA molecules, the mRNA and conformational changes in the ribosome. This Pelodictyon phaeoclathratiforme (strain DSM 5477 / BU-1) protein is Elongation factor G.